The following is a 335-amino-acid chain: Pregnancy-specific beta-1-glycoprotein 2 (335 aa).

Positions 1-34 are cleaved as a signal peptide; sequence MGPLSAPPCTEHIKWKGLLVTASLLNFWNLPTTA. Residues 35–144 form the Ig-like V-type domain; the sequence is QVTIEAQPPK…TGYFTFTLYL (110 aa). 4 N-linked (GlcNAc...) asparagine glycosylation sites follow: Asn61, Asn104, Asn111, and Asn199. 2 consecutive Ig-like C2-type domains span residues 147 to 234 and 239 to 317; these read PKPS…VTLN and PDLP…TSLT. 2 disulfide bridges follow: Cys169–Cys217 and Cys261–Cys301.

It belongs to the immunoglobulin superfamily. CEA family.

The protein localises to the secreted. This Homo sapiens (Human) protein is Pregnancy-specific beta-1-glycoprotein 2 (PSG2).